A 267-amino-acid chain; its full sequence is tRNA pseudouridine synthase A (267 aa).

Asp-51 (nucleophile) is an active-site residue. Tyr-109 is a binding site for substrate.

Belongs to the tRNA pseudouridine synthase TruA family. As to quaternary structure, homodimer.

It catalyses the reaction uridine(38/39/40) in tRNA = pseudouridine(38/39/40) in tRNA. Its function is as follows. Formation of pseudouridine at positions 38, 39 and 40 in the anticodon stem and loop of transfer RNAs. This chain is tRNA pseudouridine synthase A, found in Staphylococcus saprophyticus subsp. saprophyticus (strain ATCC 15305 / DSM 20229 / NCIMB 8711 / NCTC 7292 / S-41).